Here is a 407-residue protein sequence, read N- to C-terminus: 41 kDa spicule matrix protein (407 aa).

A signal peptide spans 1 to 17 (MKGVLFIVASLVAFATG). One can recognise a C-type lectin domain in the interval 29–160 (SGQSCYRYFN…PGRAPVMKRQ (132 aa)). Disordered regions lie at residues 143-176 (PQNP…IPQG) and 204-407 (IGQQ…DALA). Over residues 223–369 (NQPGMGGRQP…MGGRQPGMGG (147 aa)) the composition is skewed to gly residues. Low complexity predominate over residues 370–398 (QQPNNPNNPNNPNNPNNPNNPNPRFNRPR).

It belongs to the SM50 family. Expressed specifically in the micromere/primary mesenchyme cells (PMC) lineage.

It localises to the secreted. In terms of biological role, major matrix protein of the sea urchin embryo spicule which directs crystal growth in certain orientations and inhibit growth in others. The sequence is that of 41 kDa spicule matrix protein from Hemicentrotus pulcherrimus (Sea urchin).